We begin with the raw amino-acid sequence, 115 residues long: Large ribosomal subunit protein bL20 (115 aa).

The protein belongs to the bacterial ribosomal protein bL20 family.

Functionally, binds directly to 23S ribosomal RNA and is necessary for the in vitro assembly process of the 50S ribosomal subunit. It is not involved in the protein synthesizing functions of that subunit. The chain is Large ribosomal subunit protein bL20 from Chlorobium phaeovibrioides (strain DSM 265 / 1930) (Prosthecochloris vibrioformis (strain DSM 265)).